Here is a 266-residue protein sequence, read N- to C-terminus: Ciliary microtubule inner protein 4 (266 aa).

Polar residues-rich tracts occupy residues 1–15 and 24–38; these read MELSHRQGTTTLTRT and QDMNSFRANHSSLDN. The segment at 1–124 is disordered; the sequence is MELSHRQGTT…SPEQRTVPLS (124 aa). Residues 47–63 show a composition bias toward low complexity; that stretch reads LSQSPLGSSLGQGYLET. A compositionally biased stretch (basic and acidic residues) spans 81–102; sequence HPEDLKKGASRSSSRDARETFR.

Only detected in testis, in the spermatids and sperm within the seminiferous tubules (at protein level).

It localises to the cytoplasmic vesicle. Its subcellular location is the secretory vesicle. It is found in the acrosome. The protein localises to the cell projection. The protein resides in the cilium. It localises to the flagellum. Functionally, seems to be associated with spermiogenesis but is not essential for sperm development and male fertility. The protein is Ciliary microtubule inner protein 4 (Cimip4) of Mus musculus (Mouse).